A 189-amino-acid chain; its full sequence is UPF0301 protein RP032 (189 aa).

The protein belongs to the UPF0301 (AlgH) family.

The protein is UPF0301 protein RP032 of Rickettsia prowazekii (strain Madrid E).